Here is a 334-residue protein sequence, read N- to C-terminus: Fructose-1,6-bisphosphatase class 1 (334 aa).

Residues Glu90, Asp113, Leu115, and Asp116 each coordinate Mg(2+). Substrate is bound by residues 116-119 (DGSS), Asn209, Tyr242, and Lys272. Residue Glu278 coordinates Mg(2+).

It belongs to the FBPase class 1 family. In terms of assembly, homotetramer. Mg(2+) is required as a cofactor.

The protein localises to the cytoplasm. It catalyses the reaction beta-D-fructose 1,6-bisphosphate + H2O = beta-D-fructose 6-phosphate + phosphate. It participates in carbohydrate biosynthesis; gluconeogenesis. This is Fructose-1,6-bisphosphatase class 1 from Haemophilus ducreyi (strain 35000HP / ATCC 700724).